Consider the following 198-residue polypeptide: Large ribosomal subunit protein uL5 (198 aa).

This sequence belongs to the universal ribosomal protein uL5 family. Part of the 50S ribosomal subunit; part of the 5S rRNA/L5/L18/L25 subcomplex. Contacts the 5S rRNA and the P site tRNA. Forms a bridge to the 30S subunit in the 70S ribosome.

In terms of biological role, this is one of the proteins that bind and probably mediate the attachment of the 5S RNA into the large ribosomal subunit, where it forms part of the central protuberance. In the 70S ribosome it contacts protein S13 of the 30S subunit (bridge B1b), connecting the 2 subunits; this bridge is implicated in subunit movement. Contacts the P site tRNA; the 5S rRNA and some of its associated proteins might help stabilize positioning of ribosome-bound tRNAs. In Chlorobium phaeovibrioides (strain DSM 265 / 1930) (Prosthecochloris vibrioformis (strain DSM 265)), this protein is Large ribosomal subunit protein uL5.